The following is an 826-amino-acid chain: Leucine--tRNA ligase (826 aa).

The 'HIGH' region motif lies at 41–51; it reads PYPSGKLHMGH. The 'KMSKS' region signature appears at 586 to 590; it reads KMSKS. K589 is a binding site for ATP.

This sequence belongs to the class-I aminoacyl-tRNA synthetase family.

It localises to the cytoplasm. The enzyme catalyses tRNA(Leu) + L-leucine + ATP = L-leucyl-tRNA(Leu) + AMP + diphosphate. The sequence is that of Leucine--tRNA ligase from Natranaerobius thermophilus (strain ATCC BAA-1301 / DSM 18059 / JW/NM-WN-LF).